Reading from the N-terminus, the 197-residue chain is Prefoldin subunit 3 (197 aa).

Ala-2 carries the post-translational modification N-acetylalanine. N6-acetyllysine is present on Lys-59.

This sequence belongs to the prefoldin subunit alpha family. In terms of assembly, heterohexamer of two PFD-alpha type and four PFD-beta type subunits. Binds to the C-terminal part of VHL. As to expression, ubiquitous.

The protein resides in the cytoplasm. The protein localises to the nucleus. In terms of biological role, binds specifically to cytosolic chaperonin (c-CPN) and transfers target proteins to it. Binds to nascent polypeptide chain and promotes folding in an environment in which there are many competing pathways for nonnative proteins. The protein is Prefoldin subunit 3 (VBP1) of Homo sapiens (Human).